Consider the following 640-residue polypeptide: G protein-coupled receptor kinase 1 (640 aa).

The tract at residues 1–201 (MEIENIVANT…LEKRPVDKHT (201 aa)) is N-terminal. The region spanning 52-187 (YAFVVEKQPI…IQTMYFHRFL (136 aa)) is the RGS domain. The region spanning 202 to 469 (FRLYRVLGKG…AEEIRAHPFF (268 aa)) is the Protein kinase domain. ATP is bound by residues 208-216 (LGKGGFGEV) and lysine 231. Aspartate 327 functions as the Proton acceptor in the catalytic mechanism. The AGC-kinase C-terminal domain maps to 479–544 (EPVPWKKMEA…GCVSIPWQSE (66 aa)). The segment at 610 to 640 (GVDQQQPSTSAKPAAVRSSRAASASGRTSMI) is disordered. Low complexity predominate over residues 619 to 640 (SAKPAAVRSSRAASASGRTSMI).

It belongs to the protein kinase superfamily. AGC Ser/Thr protein kinase family. GPRK subfamily.

It carries out the reaction [G-protein-coupled receptor] + ATP = [G-protein-coupled receptor]-phosphate + ADP + H(+). Specifically phosphorylates the activated forms of G protein-coupled receptors. The chain is G protein-coupled receptor kinase 1 (grk-1) from Caenorhabditis briggsae.